The following is a 1780-amino-acid chain: MMVFQSFILGNLVSLCMKIINSVVVVGLYYGFLTTFSIGPSYLFLLRARVMDEGEEGTEKKVSATTGFIAGQLMMFISIYYAPLHLALGRPHTITVLALPYLLFHFFWNNNKHFFDYGSTTRNEMRNLRIQCVFLNNLIFQLFNHFILPSSMLARLVNIYMFRCNNKMLFVTSSFVGWLIGHILFMKWVGLVLVWIQQNNSIRSNVLIRSNKYKFLVSELRNSMARIFSILLFITCVYYLGRTPSPIFTKKLKGTSETEERGGTKQDQEVSTEEAPFPSLFSEEREDLDKIDEMEEIRVNGKDKINKDDEFHVRTYYKKVSENRDGNKENSNLKFFKIKKKEDHFLWFEKPFVTLVFDYKRWNRPNRYIKNEKIENTIRNEMSQYFFYTCKSDGKERISFTYPPNLSTFFEMIQKKIPSFTREKAPADQMSAYWSLMNEEKKNNLKNVFFNRIEALDKKRSFENILEKTTRFCHNETKKEYLPKLYDPFLHGISRGKVKKLLPFQIITETYINIGLGGSWINKIHGILLKINSKKFEQTLEKFNRKSLSVEKKLSFFSEPREEKSHSDEEIQIFKILFDVVITDNNNQTLIKNVIYFHEINKSVPQWSYKLTSELEELEGENEENVPTEPGIRSRKAKPVVVFTDKESHNGIYTNLKDNQNFDQKDEMALIRYSQHSDFRRDLIKGSMRSQRRKTVIWEFFQAKVHSPLFFDRIDKLFFFSFDLWGLKKTILRNLMWKKKKKKIDKNEEEQLKRKERRRMEIAETWDSFLFSQTIRGFLLVTQSILRKYLILPLLIIIKNSTRALLFQVPEWSEDLKDWKREMHIKCTYNGVQLSETEFPRNWLTDGIQIKIIFPFYLKPWHKSKVQSSQKARLKKTKDKGEKNDFGFLTVWGMETELPFGSAKKKPSFFEPIFKELKKRIKKFKRKPFWVLSIFKERATILLKVAKEIKNWILQNLLFLKGKIKNISKQNRMPLFDLREISELNETKKDSIMSNQMIYGLSVQKKSMEWTNSSLSENKIKNLIDRIKTIKNQTEEILKEKENLTNTNRCNKPRYDSKIIESSKKSWQTFKRKNIRLIRKFFFFFKFCIEQLFRTIFLGIINIPRITTQLFFESTKEILDKSIYIYKNEENGEKNKNKKNTIFFISTIKNLISKKKIFSYDLCSLSQAYVFYKLSQIQVSNFSKLKAVLEYNICITSFFIKNQLKDLVQEQGILDYELKDKTFLNSQVNQWKHWLRSNSQYNLPQVAWARLVTQRWKKKINQDSLVLNQSLIKTDSYEKNKFDKFDNYKKQNFFEANSLLNPKLNLKKDYRYNLFCYKFIHSREKMFDMSIGIALDNCLVSSFLEKYNIRVIEEIGHRKYLDWRILNFLFIKKVNMRPWVDTKSKKKDSRTKVQNYQKIDKITKTDLANKKSFFFDWMGMNEEILNRRLTNFEFFFFPEFVLFSSTYKTKPWVIPIKLLLFNFNEKKNVNKKITLKNKGFISSNEKGSLWFYNLNKEENGLAGQGELESDNEKQRNPESVLLNQEKNIDENYAESKIKKRQNKKQYKSNTEAELELFLTRYSRFQLRWNCFLNQKIINNIKVYCLLVRLKNPNEITISCIERGELSLDILMIEKNFTFTKLMKKGMLIVEPVRLSVKNDGQLIIYRTIGISLVHKNKPKISKRYKNIDKKNNYDCFIPENILSPKRRREFRILICFNLKKKNARDRNSRFDKNIKNLTTVLHKKKDLDKDKKTLIKLKSFLWPNFRLEDLACMNRYWFNTTNGNRFSMIRIHMYTRFKIH.

Helical transmembrane passes span 19-39 (IINSVVVVGLYYGFLTTFSIG), 68-88 (FIAGQLMMFISIYYAPLHLAL), 91-111 (PHTITVLALPYLLFHFFWNNN), 133-153 (VFLNNLIFQLFNHFILPSSML), 176-196 (VGWLIGHILFMKWVGLVLVWI), and 227-247 (IFSILLFITCVYYLGRTPSPI). The interval 251–275 (KLKGTSETEERGGTKQDQEVSTEEA) is disordered. A compositionally biased stretch (basic and acidic residues) spans 254–268 (GTSETEERGGTKQDQ).

Belongs to the TIC214 family. In terms of assembly, part of the Tic complex.

Its subcellular location is the plastid. It is found in the chloroplast inner membrane. Its function is as follows. Involved in protein precursor import into chloroplasts. May be part of an intermediate translocation complex acting as a protein-conducting channel at the inner envelope. In Draba nemorosa (Woodland whitlowgrass), this protein is Protein TIC 214.